The chain runs to 213 residues: MKSLQALFGGTFDPVHYGHLKPVETLANLIGLSRVIIMPNNVPPHRPQPEASSAQRKYMLELAIADKPLFTLDERELQRNAPSYTAQTLKAWREEQGPEAPLAFIIGQDSLLNFPTWHDYDTILDNTHLIVCRRPGYPLEMTQAQHQQWLEQHLTHTPDDLHQLPAGKIYLAETPWLNISATLIRERLEKGESCDDLLPENVLNYINQQGLYR.

Belongs to the NadD family.

The enzyme catalyses nicotinate beta-D-ribonucleotide + ATP + H(+) = deamido-NAD(+) + diphosphate. It functions in the pathway cofactor biosynthesis; NAD(+) biosynthesis; deamido-NAD(+) from nicotinate D-ribonucleotide: step 1/1. Its function is as follows. Catalyzes the reversible adenylation of nicotinate mononucleotide (NaMN) to nicotinic acid adenine dinucleotide (NaAD). This Salmonella typhimurium (strain LT2 / SGSC1412 / ATCC 700720) protein is Nicotinate-nucleotide adenylyltransferase.